A 71-amino-acid chain; its full sequence is Equinin B (71 aa).

The signal sequence occupies residues 1–11 (MAVIMVDQAEG). A propeptide spanning residues 46-71 (GDEPQQMALDDESDPLVILPNNYNDY) is cleaved from the precursor.

Post-translationally, contains 4 disulfide bonds.

It localises to the secreted. The protein resides in the target cell membrane. Antimicrobial peptide with inhibitory activity against both Gram-positive and Gram-negative bacteria (E.coli (MIC=0.25 ug/ml), M.lysodeikticus (MIC=0.25 ug/ml), and V.alginolyticus (MIC=0.25 ug/ml)). Does not show hemolytic activity. This is Equinin B from Actinia equina (Beadlet anemone).